The following is a 110-amino-acid chain: Cytochrome subunit of sulfide dehydrogenase (110 aa).

The signal sequence occupies residues 1–16 (MLAAAPLLLASGNGFA). 4 residues coordinate heme c: C41, C44, H45, and M83.

As to quaternary structure, dimer of one cytochrome and one flavoprotein. Binds 1 heme c group covalently per subunit.

Its subcellular location is the periplasm. Its function is as follows. Monoheme cytochrome that function as the electron transport subunit of sulfide dehydrogenase. This chain is Cytochrome subunit of sulfide dehydrogenase (fccA), found in Chlorobaculum tepidum (strain ATCC 49652 / DSM 12025 / NBRC 103806 / TLS) (Chlorobium tepidum).